A 417-amino-acid chain; its full sequence is Serine hydroxymethyltransferase (417 aa).

Residues Leu-121 and 125–127 (GHL) each bind (6S)-5,6,7,8-tetrahydrofolate. Residue Lys-229 is modified to N6-(pyridoxal phosphate)lysine. 355-357 (SPF) is a (6S)-5,6,7,8-tetrahydrofolate binding site.

Belongs to the SHMT family. In terms of assembly, homodimer. It depends on pyridoxal 5'-phosphate as a cofactor.

The protein localises to the cytoplasm. The enzyme catalyses (6R)-5,10-methylene-5,6,7,8-tetrahydrofolate + glycine + H2O = (6S)-5,6,7,8-tetrahydrofolate + L-serine. The protein operates within one-carbon metabolism; tetrahydrofolate interconversion. It functions in the pathway amino-acid biosynthesis; glycine biosynthesis; glycine from L-serine: step 1/1. Functionally, catalyzes the reversible interconversion of serine and glycine with tetrahydrofolate (THF) serving as the one-carbon carrier. This reaction serves as the major source of one-carbon groups required for the biosynthesis of purines, thymidylate, methionine, and other important biomolecules. Also exhibits THF-independent aldolase activity toward beta-hydroxyamino acids, producing glycine and aldehydes, via a retro-aldol mechanism. The chain is Serine hydroxymethyltransferase from Xanthomonas euvesicatoria pv. vesicatoria (strain 85-10) (Xanthomonas campestris pv. vesicatoria).